The following is a 181-amino-acid chain: Oligoribonuclease (181 aa).

The Exonuclease domain maps to 8-171; the sequence is LIWIDLEMTG…DDIRESVAEL (164 aa). Tyr129 is a catalytic residue.

Belongs to the oligoribonuclease family.

The protein localises to the cytoplasm. Functionally, 3'-to-5' exoribonuclease specific for small oligoribonucleotides. This chain is Oligoribonuclease, found in Photorhabdus laumondii subsp. laumondii (strain DSM 15139 / CIP 105565 / TT01) (Photorhabdus luminescens subsp. laumondii).